The sequence spans 454 residues: Asparagine--tRNA ligase (454 aa).

It belongs to the class-II aminoacyl-tRNA synthetase family. As to quaternary structure, homodimer.

The protein resides in the cytoplasm. It carries out the reaction tRNA(Asn) + L-asparagine + ATP = L-asparaginyl-tRNA(Asn) + AMP + diphosphate + H(+). The polypeptide is Asparagine--tRNA ligase (Ureaplasma parvum serovar 3 (strain ATCC 27815 / 27 / NCTC 11736)).